A 151-amino-acid polypeptide reads, in one-letter code: UPF0208 membrane protein Spro_3315 (151 aa).

2 helical membrane passes run 46–64 (FAVR…WQIA) and 70–90 (GPAI…LWWL).

It belongs to the UPF0208 family.

It localises to the cell inner membrane. This is UPF0208 membrane protein Spro_3315 from Serratia proteamaculans (strain 568).